Here is a 67-residue protein sequence, read N- to C-terminus: MRIHYLLFALLFLFLVPVPGHGGIINTLQKYYCRVRGGRCAVLSCLPKEEQIGKCSTRGRKCCRRKK.

Positions 1–22 are cleaved as a signal peptide; it reads MRIHYLLFALLFLFLVPVPGHG. 3 disulfides stabilise this stretch: Cys-33–Cys-62, Cys-40–Cys-55, and Cys-45–Cys-63.

Highly expressed in skin and tonsils, and to a lesser extent in trachea, uterus, kidney, thymus, adenoid, pharynx and tongue. Low expression in salivary gland, bone marrow, colon, stomach, polyp and larynx. No expression in small intestine.

Its subcellular location is the secreted. Its function is as follows. Exhibits antimicrobial activity against Gram-positive bacteria S.aureus and S.pyogenes, Gram-negative bacteria P.aeruginosa and E.coli and the yeast C.albicans. Kills multiresistant S.aureus and vancomycin-resistant E.faecium. No significant hemolytic activity was observed. The sequence is that of Beta-defensin 103 (DEFB103A) from Homo sapiens (Human).